Reading from the N-terminus, the 704-residue chain is Capsule polysaccharide modification protein LipA (704 aa).

The protein resides in the cell inner membrane. Involved in the phospholipid modification of the capsular polysaccharide, a strong requirement for its translocation to the cell surface. The polypeptide is Capsule polysaccharide modification protein LipA (lipA) (Neisseria meningitidis serogroup B (strain ATCC BAA-335 / MC58)).